A 505-amino-acid polypeptide reads, in one-letter code: Ribose import ATP-binding protein RbsA (505 aa).

ABC transporter domains are found at residues 12–249 and 259–504; these read LQMK…VGRK and VKKG…VAFS. Position 44–51 (44–51) interacts with ATP; sequence GENGAGKS.

This sequence belongs to the ABC transporter superfamily. Ribose importer (TC 3.A.1.2.1) family. As to quaternary structure, the complex is composed of an ATP-binding protein (RbsA), two transmembrane proteins (RbsC) and a solute-binding protein (RbsB).

Its subcellular location is the cell membrane. The catalysed reaction is D-ribose(out) + ATP + H2O = D-ribose(in) + ADP + phosphate + H(+). Its function is as follows. Part of the ABC transporter complex RbsABC involved in ribose import. Responsible for energy coupling to the transport system. This chain is Ribose import ATP-binding protein RbsA, found in Clostridium tetani (strain Massachusetts / E88).